An 821-amino-acid chain; its full sequence is Dapper homolog 1 (821 aa).

Residues 88 to 136 (LNTEEKLLEENILLLRKQLNCLRRRDAGLINQLQELDRQISDLRLDTET) are a coiled coil. 4 disordered regions span residues 288 to 312 (SKPG…SSWH), 386 to 432 (QDAS…STTN), 564 to 615 (NSAS…KTKR), and 627 to 655 (ERHT…VLAK). Over residues 388–400 (ASATSTEPSTASP) the composition is skewed to low complexity. Residues 401-432 (QRQWSAESKGGTPQNGAYLSSSQPQNSYSTTN) show a composition bias toward polar residues. 3 stretches are compositionally biased toward basic residues: residues 584–593 (DKHRTGSRRT), 601–615 (HLHK…KTKR), and 639–649 (AQRHHGHHRHH). The PDZ-binding motif lies at 818 to 821 (MTTV).

Belongs to the dapper family. As to quaternary structure, interacts with dvl2.

It is found in the cytoplasm. In terms of biological role, involved in regulation of intracellular signaling pathways during development. Specifically thought to play a role in canonical and/or non-canonical Wnt signaling pathways through interaction with DSH (Dishevelled) family proteins. Binds to dvl2 and may regulate the degradation of ctnnb1/beta-catenin, thereby modulating the transcriptional activation of target genes of the Wnt signaling pathway. Seems to activate the canonical Wnt signaling pathway. This chain is Dapper homolog 1 (dact1), found in Danio rerio (Zebrafish).